A 663-amino-acid polypeptide reads, in one-letter code: DNA ligase (663 aa).

Residues 33 to 37 (DYSYD), 82 to 83 (SI), and Glu-112 contribute to the NAD(+) site. Lys-114 acts as the N6-AMP-lysine intermediate in catalysis. Arg-135, Glu-171, Lys-285, and Lys-309 together coordinate NAD(+). Positions 403, 406, 419, and 424 each coordinate Zn(2+). The BRCT domain maps to 581-663 (DKEAPLQGKV…LRILDAKSVS (83 aa)).

It belongs to the NAD-dependent DNA ligase family. LigA subfamily. Mg(2+) serves as cofactor. Mn(2+) is required as a cofactor.

It carries out the reaction NAD(+) + (deoxyribonucleotide)n-3'-hydroxyl + 5'-phospho-(deoxyribonucleotide)m = (deoxyribonucleotide)n+m + AMP + beta-nicotinamide D-nucleotide.. DNA ligase that catalyzes the formation of phosphodiester linkages between 5'-phosphoryl and 3'-hydroxyl groups in double-stranded DNA using NAD as a coenzyme and as the energy source for the reaction. It is essential for DNA replication and repair of damaged DNA. This chain is DNA ligase, found in Chlamydia trachomatis serovar D (strain ATCC VR-885 / DSM 19411 / UW-3/Cx).